Consider the following 333-residue polypeptide: 4-hydroxy-3-methylbut-2-enyl diphosphate reductase (333 aa).

Cys-20 lines the [4Fe-4S] cluster pocket. His-49 and His-82 together coordinate (2E)-4-hydroxy-3-methylbut-2-enyl diphosphate. Dimethylallyl diphosphate-binding residues include His-49 and His-82. The isopentenyl diphosphate site is built by His-49 and His-82. Cys-104 is a binding site for [4Fe-4S] cluster. Residue His-132 participates in (2E)-4-hydroxy-3-methylbut-2-enyl diphosphate binding. Residue His-132 participates in dimethylallyl diphosphate binding. Position 132 (His-132) interacts with isopentenyl diphosphate. Glu-134 functions as the Proton donor in the catalytic mechanism. Position 172 (Thr-172) interacts with (2E)-4-hydroxy-3-methylbut-2-enyl diphosphate. Residue Cys-202 coordinates [4Fe-4S] cluster. 4 residues coordinate (2E)-4-hydroxy-3-methylbut-2-enyl diphosphate: Ser-230, Ser-231, Asn-232, and Ser-274. Dimethylallyl diphosphate is bound by residues Ser-230, Ser-231, Asn-232, and Ser-274. 4 residues coordinate isopentenyl diphosphate: Ser-230, Ser-231, Asn-232, and Ser-274.

It belongs to the IspH family. The cofactor is [4Fe-4S] cluster.

The catalysed reaction is isopentenyl diphosphate + 2 oxidized [2Fe-2S]-[ferredoxin] + H2O = (2E)-4-hydroxy-3-methylbut-2-enyl diphosphate + 2 reduced [2Fe-2S]-[ferredoxin] + 2 H(+). It carries out the reaction dimethylallyl diphosphate + 2 oxidized [2Fe-2S]-[ferredoxin] + H2O = (2E)-4-hydroxy-3-methylbut-2-enyl diphosphate + 2 reduced [2Fe-2S]-[ferredoxin] + 2 H(+). The protein operates within isoprenoid biosynthesis; dimethylallyl diphosphate biosynthesis; dimethylallyl diphosphate from (2E)-4-hydroxy-3-methylbutenyl diphosphate: step 1/1. Its pathway is isoprenoid biosynthesis; isopentenyl diphosphate biosynthesis via DXP pathway; isopentenyl diphosphate from 1-deoxy-D-xylulose 5-phosphate: step 6/6. In terms of biological role, catalyzes the conversion of 1-hydroxy-2-methyl-2-(E)-butenyl 4-diphosphate (HMBPP) into a mixture of isopentenyl diphosphate (IPP) and dimethylallyl diphosphate (DMAPP). Acts in the terminal step of the DOXP/MEP pathway for isoprenoid precursor biosynthesis. The polypeptide is 4-hydroxy-3-methylbut-2-enyl diphosphate reductase (Polaromonas sp. (strain JS666 / ATCC BAA-500)).